The following is a 331-amino-acid chain: Probable serine hydrolase (331 aa).

The segment at 1–28 is disordered; it reads MGQTRVAATTAAQSPAAELSPETNGQTE. The span at 7–17 shows a compositional bias: low complexity; the sequence is AATTAAQSPAA. Residues 63-163 form the AB hydrolase-1 domain; that stretch reads PIIALHGWQD…EVEKLINIDI (101 aa). S138 is an active-site residue.

This sequence belongs to the AB hydrolase superfamily. In terms of tissue distribution, ubiquitously expressed before embryonic stage 11. At stage 11, expression is concentrated in the foregut and posterior midgut. By stage 15, in gastric caeca, pharynx, posterior spiracles and anterior edge of midgut. At the end of embryogenesis, expression is confined to gastric caeca. During third instar larvae, expressed at low levels in gastric caeca, midgut and hindgut and high level in fat body.

In terms of biological role, may have a role in detoxification and digestion during embryogenesis and larval development. The chain is Probable serine hydrolase (kraken) from Drosophila melanogaster (Fruit fly).